A 444-amino-acid polypeptide reads, in one-letter code: Probable glycine dehydrogenase (decarboxylating) subunit 1 (444 aa).

The protein belongs to the GcvP family. N-terminal subunit subfamily. In terms of assembly, the glycine cleavage system is composed of four proteins: P, T, L and H. In this organism, the P 'protein' is a heterodimer of two subunits.

The enzyme catalyses N(6)-[(R)-lipoyl]-L-lysyl-[glycine-cleavage complex H protein] + glycine + H(+) = N(6)-[(R)-S(8)-aminomethyldihydrolipoyl]-L-lysyl-[glycine-cleavage complex H protein] + CO2. Functionally, the glycine cleavage system catalyzes the degradation of glycine. The P protein binds the alpha-amino group of glycine through its pyridoxal phosphate cofactor; CO(2) is released and the remaining methylamine moiety is then transferred to the lipoamide cofactor of the H protein. The chain is Probable glycine dehydrogenase (decarboxylating) subunit 1 from Chlorobaculum parvum (strain DSM 263 / NCIMB 8327) (Chlorobium vibrioforme subsp. thiosulfatophilum).